Reading from the N-terminus, the 467-residue chain is UDP-N-acetylmuramate--L-alanine ligase (467 aa).

114–120 (GTHGKTT) contributes to the ATP binding site.

The protein belongs to the MurCDEF family.

The protein localises to the cytoplasm. It carries out the reaction UDP-N-acetyl-alpha-D-muramate + L-alanine + ATP = UDP-N-acetyl-alpha-D-muramoyl-L-alanine + ADP + phosphate + H(+). It participates in cell wall biogenesis; peptidoglycan biosynthesis. Functionally, cell wall formation. This Rhodopseudomonas palustris (strain BisB18) protein is UDP-N-acetylmuramate--L-alanine ligase.